The sequence spans 766 residues: U3 small nucleolar RNA-associated protein 14 homolog C (766 aa).

Residues 14–42 are disordered; the sequence is HQEELVDLPKNYPLSENEDEGDSDGERKH. Residues Ser-28, Ser-51, Ser-76, and Ser-80 each carry the phosphoserine modification. Lys-121 participates in a covalent cross-link: Glycyl lysine isopeptide (Lys-Gly) (interchain with G-Cter in SUMO2). Residue Thr-204 is modified to Phosphothreonine. 2 coiled-coil regions span residues 216-245 and 316-346; these read LEEAKMHRAELQRARALQSYYEAKARKEKK and LEARQAMQEQLAKNKELTQKLQVASESEEEE. Residues 365-563 form a disordered region; it reads MNVDGPNPWM…EQLINLQNFL (199 aa). Low complexity predominate over residues 396–405; sequence ELAAHEVSAS. Residues Ser-403 and Ser-405 each carry the phosphoserine modification. Basic and acidic residues predominate over residues 407-434; the sequence is AEERPVAEEEILLREFEERQSLRKRSEL. Position 443 is a phosphoserine (Ser-443). Lys-447 is covalently cross-linked (Glycyl lysine isopeptide (Lys-Gly) (interchain with G-Cter in SUMO2)). Residue Ser-451 is modified to Phosphoserine. Residues 452–470 adopt a coiled-coil conformation; sequence QEVLSELRALSQKLKEKHQ. Positions 466 to 475 are enriched in basic residues; that stretch reads KEKHQSRKQK. Over residues 502–527 the composition is skewed to basic and acidic residues; it reads RSERVQTLEELEELGKEDCFQNKELP. A Glycyl lysine isopeptide (Lys-Gly) (interchain with G-Cter in SUMO2) cross-link involves residue Lys-517. The span at 533 to 542 shows a compositional bias: polar residues; it reads GQQSERTPNN. The segment covering 545-555 has biased composition (basic and acidic residues); it reads DAPKEKKEKEQ. Ser-567 bears the Phosphoserine mark. Lys-732 is covalently cross-linked (Glycyl lysine isopeptide (Lys-Gly) (interchain with G-Cter in SUMO2)). A disordered region spans residues 734 to 766; sequence EDVGYQSSSRSDLPVIQRNPKRITTRHNKEEKL.

The protein belongs to the UTP14 family. In terms of tissue distribution, expressed in testis.

It is found in the nucleus. It localises to the nucleolus. Its function is as follows. Essential for spermatogenesis. May be required specifically for ribosome biogenesis and hence protein synthesis during male meiosis. This Homo sapiens (Human) protein is U3 small nucleolar RNA-associated protein 14 homolog C (UTP14C).